The sequence spans 800 residues: MTASGTHGGYDVLILYASDAAEWCQYLQNLFLSTRHIRKHHIQSYQLEGESAISDQELDLFNRSRSIIILLSAELVQNFYCPPVLQSLQEALWPPHKVVKLFCGVTDCDDYLTFFKDWYQWQELTYDDEPDAYLEAVKKAISEDSGCDSVTDTETEDEKTSVYSCQLAMNEEHESSKSTGEHLVVQPDHIRCGVQTTVYIIMKCRLDDKVKTEVEFSPENSSSVRVLAELENEYTISVEAPNLTSGTVPLQIYSGDLMVGETSVTYHTDMEEISSLLANAANPVQFMCQAFKIVPYSIEALDKLLTESLKKNIPASGLHLFGINQLEEDDMTTNQRDEELPTLLHFSARYGLKNLTALLLTCPGALQAYSVANKYGHYPNTIAEKHGFKDLRQFIDEYVETADMLKSHIKEELMQGEEDESVYESMAHLSTDLLMKCSLNPGSDEELYESMAGFVPGAPEDLYVEMLQSKPDTPISGDEISLTVKDSMLRKFLEGGSTDAPDSGEGVSQQYGEDLYYSVEKDTFPQEMASRPPVPVPRPESSSPQPDNELYISKVFAQKAQRPENLYVPRGKVRKETIVRPVRDLSQSSIYDPFAGMKTPGQRQLITLQEQVKMGILNVDEAVLHFKEWQLNQKKRSESFRFQQENLKRLRDSITRRQMEKQKSGKSADLEITVPIRRSHNTLGKPECGIYEYAPRKNIFPPKKELKRGDWKTESTSSTTSSASNRSSTRSILSVSSGMEGDSEDNEVSEASRSRSPIPSQAERLPLPLPERPPRVPPRGASRPVNCEGFYPPPVPPRGR.

A TIR domain is found at 8-145; the sequence is GGYDVLILYA…AVKKAISEDS (138 aa). Residues 10 to 144 are necessary and sufficient to mediate inhibition of NF-kappa-B downstream of activated TLRs; that stretch reads YDVLILYASD…EAVKKAISED (135 aa). Positions 185–321 constitute a DBB domain; it reads VQPDHIRCGV…NIPASGLHLF (137 aa). Tyrosine 266 is subject to Phosphotyrosine. Phosphotyrosine; by SYK is present on residues tyrosine 423, tyrosine 448, and tyrosine 463. Residues 527–548 form a disordered region; that stretch reads EMASRPPVPVPRPESSSPQPDN. A coiled-coil region spans residues 643-663; sequence QQENLKRLRDSITRRQMEKQK. Positions 702–713 are enriched in basic and acidic residues; the sequence is PKKELKRGDWKT. A disordered region spans residues 702–800; the sequence is PKKELKRGDW…YPPPVPPRGR (99 aa). The span at 714-737 shows a compositional bias: low complexity; the sequence is ESTSSTTSSASNRSSTRSILSVSS. Positions 749–759 are enriched in polar residues; that stretch reads SEASRSRSPIP. Composition is skewed to pro residues over residues 767 to 777 and 791 to 800; these read LPLPERPPRVP and YPPPVPPRGR.

Homooligomer. Interacts (phosphorylated on tyrosine residues within YXXM motifs) with PIK3R1 (via SH2 domain); required for BCR- and TLR-mediated activation of phosphoinositide 3-kinase. Post-translationally, constitutively phosphorylated. Phosphorylated on tyrosine residues within the YXXM motifs by BTK and SYK. Isoform 1 and isoform 2 are phosphorylated on tyrosine residues, most likely within the YXXM motifs, via CD19 activation.

Its subcellular location is the cytoplasm. It is found in the cell membrane. Signaling adapter that contributes to B-cell development by linking B-cell receptor (BCR) signaling to the phosphoinositide 3-kinase (PI3K)-Akt signaling pathway. Has a complementary role to the BCR coreceptor CD19, coupling BCR and PI3K activation by providing a docking site for the PI3K subunit PIK3R1. Alternatively, links Toll-like receptor (TLR) signaling to PI3K activation, a process preventing excessive inflammatory cytokine production. Also involved in the activation of PI3K in natural killer cells. May be involved in the survival of mature B-cells via activation of REL. In Gallus gallus (Chicken), this protein is Phosphoinositide 3-kinase adapter protein 1 (PIK3AP1).